Consider the following 352-residue polypeptide: Galactokinase (352 aa).

17-20 (EHTD) is a binding site for substrate. ATP contacts are provided by residues serine 49 and 101 to 107 (GAGLSSS). 2 residues coordinate Mg(2+): serine 107 and glutamate 139. Aspartate 151 functions as the Proton acceptor in the catalytic mechanism. A substrate-binding site is contributed by tyrosine 200.

The protein belongs to the GHMP kinase family. GalK subfamily. As to quaternary structure, monomer.

It localises to the cytoplasm. It catalyses the reaction alpha-D-galactose + ATP = alpha-D-galactose 1-phosphate + ADP + H(+). It participates in carbohydrate metabolism; galactose metabolism. Its function is as follows. Catalyzes the transfer of the gamma-phosphate of ATP to D-galactose to form alpha-D-galactose-1-phosphate (Gal-1-P). Is very specific for its substrate, since it is not able to use D-glucose, D-fructose, D-mannose, 2-deoxy-D-glucose, and D-glucosamine as substrates. The chain is Galactokinase from Pyrococcus furiosus (strain ATCC 43587 / DSM 3638 / JCM 8422 / Vc1).